The chain runs to 226 residues: Glutathione S-transferase kappa 1 (226 aa).

Residue 16-18 (SPY) coordinates glutathione. N6-succinyllysine is present on residues K36 and K49. N53 contributes to the glutathione binding site. 2 positions are modified to N6-acetyllysine; alternate: K68 and K74. Residues K68 and K74 each carry the N6-succinyllysine; alternate modification. Position 85 is an N6-acetyllysine (K85). An N6-acetyllysine; alternate mark is found at K93 and K116. N6-succinyllysine; alternate occurs at positions 93 and 116. At K144 the chain carries N6-succinyllysine. N6-acetyllysine; alternate is present on K158. K158 carries the post-translational modification N6-succinyllysine; alternate. Residue K165 is modified to N6-acetyllysine. N6-acetyllysine; alternate occurs at positions 167 and 177. K167 and K177 each carry N6-succinyllysine; alternate. L183 provides a ligand contact to glutathione. N6-succinyllysine is present on K193. Position 200-201 (200-201 (SD)) interacts with glutathione.

This sequence belongs to the GST superfamily. Kappa family. As to quaternary structure, homodimer.

The protein resides in the mitochondrion matrix. The enzyme catalyses RX + glutathione = an S-substituted glutathione + a halide anion + H(+). Its function is as follows. Glutathione S-transferase that catalyzes the conjugation of glutathione to exogenous and endogenous compounds. This chain is Glutathione S-transferase kappa 1 (Gstk1), found in Rattus norvegicus (Rat).